A 219-amino-acid chain; its full sequence is MSESIMDFRRAKFLISAPDIAHLNQYLPGDVGVEIAFAGRSNAGKSSALNALTEQKSLARTSKTPGRTQLINVFALDDDRRLVDLPGYGFAQVPLALKNKWQQALGEYLQKRACLSGVVVLMDIRHPLKDLDMQMIEWAVASEIPVLALLTKSDKLAQSAKMKTVNEVRSALADFGDWVKVEPFSSLKGTGKPKVLSILNEWCHPQWLMDAMAQESPED.

An EngB-type G domain is found at 31-205 (VGVEIAFAGR…LSILNEWCHP (175 aa)). GTP is bound by residues 39-46 (GRSNAGKS), 66-70 (GRTQL), 84-87 (DLPG), 151-154 (TKSD), and 184-186 (FSS). Mg(2+)-binding residues include Ser46 and Thr68.

This sequence belongs to the TRAFAC class TrmE-Era-EngA-EngB-Septin-like GTPase superfamily. EngB GTPase family. Mg(2+) is required as a cofactor.

Functionally, necessary for normal cell division and for the maintenance of normal septation. In Shewanella denitrificans (strain OS217 / ATCC BAA-1090 / DSM 15013), this protein is Probable GTP-binding protein EngB.